The sequence spans 3460 residues: Reelin (3460 aa).

The signal sequence occupies residues 1 to 25; sequence MERSGWARQTFLLALLLGATLRARA. A Reelin domain is found at 26 to 190; it reads AAGYYPRFSP…GAPTDVTVHP (165 aa). A disulfide bridge connects residues cysteine 40 and cysteine 126. The N-linked (GlcNAc...) asparagine glycan is linked to asparagine 140. Cysteines 154 and 178 form a disulfide. N-linked (GlcNAc...) asparagine glycosylation is found at asparagine 257, asparagine 289, and asparagine 305. A disulfide bridge links cysteine 539 with cysteine 580. The stretch at 592-603 is one BNR 1 repeat; that stretch reads EFSTNHGRSWSL. Residues cysteine 608 and cysteine 613 are joined by a disulfide bond. Asparagine 628 carries an N-linked (GlcNAc...) asparagine glycan. Positions 670–701 constitute an EGF-like 1 domain; the sequence is IGPSCLKFCSGRGQCTRHGCKCDPGFSGPACE. Disulfide bonds link cysteine 674–cysteine 684 and cysteine 691–cysteine 700. A BNR 2 repeat occupies 798–809; that stretch reads HYSYDNGITWKL. A disulfide bridge connects residues cysteine 894 and cysteine 936. The BNR 3 repeat unit spans residues 951 to 962; sequence EYSTNHGLTWHL. 3 cysteine pairs are disulfide-bonded: cysteine 967-cysteine 974, cysteine 1033-cysteine 1043, and cysteine 1050-cysteine 1059. Residues 1029 to 1060 form the EGF-like 2 domain; it reads IGQQCPNMCSGHGSCDHGICRCDQGYQGTECH. Residues 1156-1167 form a BNR 4 repeat; that stretch reads QYSNNGGIQWHL. N-linked (GlcNAc...) asparagine glycosylation is present at asparagine 1266. Cysteine 1270 and cysteine 1309 are joined by a disulfide. One copy of the BNR 5 repeat lies at 1322–1333; sequence QYSHDAGMSWFL. A disulfide bridge links cysteine 1338 with cysteine 1347. The region spanning 1408-1441 is the EGF-like 3 domain; that stretch reads ISEPCPSYCSGHGDCISGVCFCDLGYTAAQGTCV. One copy of the BNR 6 repeat lies at 1534-1545; sequence QYSNDNGILWHL. A glycan (N-linked (GlcNAc...) asparagine) is linked at asparagine 1599. Cysteine 1632 and cysteine 1672 form a disulfide bridge. Residues 1685–1696 form a BNR 7 repeat; the sequence is QYSLNNGKDWHL. Residues cysteine 1701 and cysteine 1708 are joined by a disulfide bond. Residue asparagine 1749 is glycosylated (N-linked (GlcNAc...) asparagine). The region spanning 1764–1795 is the EGF-like 4 domain; sequence LASGCPWMCSGRGICDAGRCVCDRGFGGPYCV. The stretch at 1883-1894 is one BNR 8 repeat; it reads QFSISGGITWHL. Asparagine 1920 is a glycosylation site (N-linked (GlcNAc...) asparagine). Residues 2042–2053 form a BNR 9 repeat; it reads EFSRDFGATWHL. Histidine 2060 and histidine 2073 together coordinate Zn(2+). In terms of domain architecture, EGF-like 5 spans 2128–2160; it reads IGPQCEEMCNGQGSCINGTKCICDPGYSGPTCK. 3 disulfide bridges follow: cysteine 2132–cysteine 2142, cysteine 2136–cysteine 2148, and cysteine 2150–cysteine 2159. The N-linked (GlcNAc...) asparagine glycan is linked to asparagine 2144. Glutamate 2178 is a Zn(2+) binding site. A disulfide bridge links cysteine 2194 with cysteine 2234. One copy of the BNR 10 repeat lies at 2249-2260; that stretch reads QYSLNGGLSWSL. Glutamate 2263 contacts Zn(2+). N-linked (GlcNAc...) asparagine glycans are attached at residues asparagine 2268 and asparagine 2316. Cystine bridges form between cysteine 2347–cysteine 2386, cysteine 2392–cysteine 2558, and cysteine 2543–cysteine 2583. Residues glutamate 2396, glutamate 2398, and histidine 2459 each contribute to the Zn(2+) site. The stretch at 2398–2409 is one BNR 11 repeat; sequence EYSVDLGLSWHP. One can recognise an EGF-like 6 domain in the interval 2477–2508; the sequence is IGDGCIDMCSGHGRCIQGNCVCDEQWGGLYCD. N-linked (GlcNAc...) asparagine glycosylation occurs at asparagine 2568. BNR repeat units lie at residues 2597 to 2608 and 2777 to 2788; these read EYSVNGGITWNL and QYSTDFGVSWNY. 5 disulfides stabilise this stretch: cysteine 2793–cysteine 2800, cysteine 2856–cysteine 2866, cysteine 2860–cysteine 2871, cysteine 2873–cysteine 2882, and cysteine 2918–cysteine 2965. The region spanning 2852–2883 is the EGF-like 7 domain; sequence LGPGCLDNCRGHGDCLREQCICDPGYSGPNCY. An N-linked (GlcNAc...) asparagine glycan is attached at asparagine 2961. One copy of the BNR 14 repeat lies at 2978–2989; sequence DYSTDGGITWTL. 2 N-linked (GlcNAc...) asparagine glycosylation sites follow: asparagine 3015 and asparagine 3072. One copy of the BNR 15 repeat lies at 3142-3154; sequence EYTKDARSDSWQL. A disulfide bridge links cysteine 3159 with cysteine 3169. Asparagine 3184 carries N-linked (GlcNAc...) asparagine glycosylation. Residues 3227-3259 enclose the EGF-like 8 domain; sequence IGEACPKLCSGHGYCTTGAICICDESFQGDDCS. 4 disulfide bridges follow: cysteine 3231-cysteine 3241, cysteine 3235-cysteine 3247, cysteine 3249-cysteine 3258, and cysteine 3295-cysteine 3345. Residues 3362-3373 form a BNR 16 repeat; sequence QYSVNNGITWHV. Residues asparagine 3411 and asparagine 3438 are each glycosylated (N-linked (GlcNAc...) asparagine).

It belongs to the reelin family. As to quaternary structure, oligomer of disulfide-linked homodimers. Post-translationally, N-glycosylated and to a lesser extent also O-glycosylated. As to expression, abundantly produced during brain ontogenesis by the Cajal-Retzius cells and other pioneer neurons located in the telencephalic marginal zone and by granule cells of the external granular layer of the cerebellum. In adult brain, preferentially expressed in GABAergic interneurons of prefrontal cortices, temporal cortex, hippocampus and glutamatergic granule cells of cerebellum. Expression is reduced to about 50% in patients with schizophrenia. Also expressed in fetal and adult liver.

It localises to the secreted. The protein localises to the extracellular space. The protein resides in the extracellular matrix. In terms of biological role, extracellular matrix serine protease secreted by pioneer neurons that plays a role in layering of neurons in the cerebral cortex and cerebellum by coordinating cell positioning during neurodevelopment. Regulates microtubule function in neurons and neuronal migration. Binding to the extracellular domains of lipoprotein receptors VLDLR and LRP8/APOER2 induces tyrosine phosphorylation of DAB1 and modulation of TAU phosphorylation. Affects migration of sympathetic preganglionic neurons in the spinal cord, where it seems to act as a barrier to neuronal migration. Enzymatic activity is important for the modulation of cell adhesion. The polypeptide is Reelin (RELN) (Homo sapiens (Human)).